Here is a 206-residue protein sequence, read N- to C-terminus: FMN-dependent NADH:quinone oxidoreductase 4 (206 aa).

FMN is bound by residues S10 and 136–139 (SSGG).

The protein belongs to the azoreductase type 1 family. As to quaternary structure, homodimer. FMN serves as cofactor.

The enzyme catalyses 2 a quinone + NADH + H(+) = 2 a 1,4-benzosemiquinone + NAD(+). It carries out the reaction N,N-dimethyl-1,4-phenylenediamine + anthranilate + 2 NAD(+) = 2-(4-dimethylaminophenyl)diazenylbenzoate + 2 NADH + 2 H(+). In terms of biological role, quinone reductase that provides resistance to thiol-specific stress caused by electrophilic quinones. Its function is as follows. Also exhibits azoreductase activity. Catalyzes the reductive cleavage of the azo bond in aromatic azo compounds to the corresponding amines. In Pseudomonas fluorescens (strain ATCC BAA-477 / NRRL B-23932 / Pf-5), this protein is FMN-dependent NADH:quinone oxidoreductase 4.